The primary structure comprises 63 residues: Hyphancin-3D (63 aa).

The signal sequence occupies residues 1 to 22 (MNFSRIIFLVFACFVALASVSA). Positions 23–26 (APEP) are cleaved as a propeptide — removed by a dipeptidylpeptidase. At Leu-61 the chain carries Leucine amide.

Belongs to the cecropin family.

Its subcellular location is the secreted. Has antibacterial activity. This Hyphantria cunea (Fall webworm moth) protein is Hyphancin-3D.